A 360-amino-acid polypeptide reads, in one-letter code: Peptide chain release factor 1 (360 aa).

Gln235 carries the N5-methylglutamine modification. The segment at 284-303 is disordered; that stretch reads RERQSKEAAERKSLVGSGDR.

It belongs to the prokaryotic/mitochondrial release factor family. In terms of processing, methylated by PrmC. Methylation increases the termination efficiency of RF1.

The protein resides in the cytoplasm. Functionally, peptide chain release factor 1 directs the termination of translation in response to the peptide chain termination codons UAG and UAA. In Bordetella avium (strain 197N), this protein is Peptide chain release factor 1.